Here is a 317-residue protein sequence, read N- to C-terminus: Aspartate carbamoyltransferase catalytic subunit (317 aa).

Carbamoyl phosphate contacts are provided by arginine 64 and threonine 65. Lysine 92 lines the L-aspartate pocket. The carbamoyl phosphate site is built by arginine 114, histidine 142, and glutamine 145. Residues arginine 176 and arginine 230 each contribute to the L-aspartate site. Carbamoyl phosphate contacts are provided by glycine 271 and proline 272.

It belongs to the aspartate/ornithine carbamoyltransferase superfamily. ATCase family. As to quaternary structure, heterododecamer (2C3:3R2) of six catalytic PyrB chains organized as two trimers (C3), and six regulatory PyrI chains organized as three dimers (R2).

It carries out the reaction carbamoyl phosphate + L-aspartate = N-carbamoyl-L-aspartate + phosphate + H(+). The protein operates within pyrimidine metabolism; UMP biosynthesis via de novo pathway; (S)-dihydroorotate from bicarbonate: step 2/3. Its function is as follows. Catalyzes the condensation of carbamoyl phosphate and aspartate to form carbamoyl aspartate and inorganic phosphate, the committed step in the de novo pyrimidine nucleotide biosynthesis pathway. The protein is Aspartate carbamoyltransferase catalytic subunit of Nitratidesulfovibrio vulgaris (strain DP4) (Desulfovibrio vulgaris).